The chain runs to 402 residues: Large ribosomal subunit protein uL3 (402 aa).

Positions 1–35 (MSHRKFSAPRHGSMGFTPKKRSKRHRGKVKAFPKD) are disordered. Basic residues predominate over residues 18 to 31 (PKKRSKRHRGKVKA).

This sequence belongs to the universal ribosomal protein uL3 family.

The protein resides in the cytoplasm. Its function is as follows. The L3 protein is a component of the large subunit of cytoplasmic ribosomes. The protein is Large ribosomal subunit protein uL3 (RPL3) of Toxocara canis (Canine roundworm).